We begin with the raw amino-acid sequence, 393 residues long: Dwarfin sma-3 (393 aa).

The 130-residue stretch at 10–139 (PAVKKLLGWK…YQRLSRPQGL (130 aa)) folds into the MH1 domain. 4 residues coordinate Zn(2+): C65, C110, C124, and H129. The disordered stretch occupies residues 136 to 190 (PQGLNSSMPSPQPISSPNTIWQSSGSSTASCASSPSPSVFSEDGGEVQVHQRPPP). Residues 141–176 (SSMPSPQPISSPNTIWQSSGSSTASCASSPSPSVFS) are compositionally biased toward low complexity. An MH2 domain is found at 197-393 (WAQITYFELN…TNLMEPNSMT (197 aa)).

The protein belongs to the dwarfin/SMAD family.

Its subcellular location is the cytoplasm. The protein localises to the nucleus. Its function is as follows. Involved in TGF-beta pathway. Plays a role in male tail tip morphogenesis. In Caenorhabditis elegans, this protein is Dwarfin sma-3.